The primary structure comprises 329 residues: Chlorophyllase-1, chloroplastic (329 aa).

The N-terminal 21 residues, methionine 1–threonine 21, are a transit peptide targeting the chloroplast. The GXSXG signature appears at glycine 145–glycine 149. Serine 147 acts as the Nucleophile in catalysis. Catalysis depends on charge relay system residues aspartate 169 and histidine 242.

This sequence belongs to the AB hydrolase superfamily. Lipase family.

The protein localises to the plastid. Its subcellular location is the chloroplast. The catalysed reaction is a chlorophyll + H2O = a chlorophyllide + phytol + H(+). Its pathway is porphyrin-containing compound metabolism; chlorophyll degradation. Catalyzes the hydrolysis of ester bond in chlorophyll to yield chlorophyllide and phytol. In Citrus unshiu (Satsuma mandarin), this protein is Chlorophyllase-1, chloroplastic.